The chain runs to 298 residues: KH domain-containing protein At1g09660/At1g09670 (298 aa).

The region spanning 152–219 is the KH domain; it reads DVPVDKYPSY…EHLCEPLHVL (68 aa). Residues 266–298 are disordered; that stretch reads NGTLREESPSPSLSPCLSPSMSPFNSKRAKTEI. Phosphoserine occurs at positions 273 and 287. The segment covering 274 to 288 has biased composition (low complexity); the sequence is PSPSLSPCLSPSMSP.

The protein resides in the nucleus. In Arabidopsis thaliana (Mouse-ear cress), this protein is KH domain-containing protein At1g09660/At1g09670.